Reading from the N-terminus, the 1055-residue chain is Bifunctional fucokinase/GDP-fucose pyrophosphorylase (1055 aa).

The GDP-fucose pyrophosphorylase stretch occupies residues 34–565 (WDAIVLTAAS…SSQRVSLEEL (532 aa)). The interval 693-1055 (GKSHSENHIS…VKVYNWSICI (363 aa)) is L-fucokinase. 826–836 (PRGSGLGTSSI) contributes to the ATP binding site.

The protein belongs to the GHMP kinase family. Mn(2+) is required as a cofactor. The cofactor is Mg(2+). As to expression, ubiquitous. Highest expression in flower buds.

It carries out the reaction L-fucose + ATP = beta-L-fucose 1-phosphate + ADP + H(+). It catalyses the reaction beta-L-fucose 1-phosphate + GTP + H(+) = GDP-beta-L-fucose + diphosphate. In terms of biological role, bifunctional enzyme involved in the salvage pathway which converts free L-fucose to GDP-L-fucose. Catalyzes two successive reactions, the ATP-dependent phosphorylation of L-fucose to L-fucose 1-phosphate, and its guanylylation to GDP-L-fucose. The sugar-1-kinase activity has a strict substrate specificity for L-fucose and ATP. The pyrophosphorylase activity has a strict substrate specificity for L-fucose 1-phosphate and GTP. In Arabidopsis thaliana (Mouse-ear cress), this protein is Bifunctional fucokinase/GDP-fucose pyrophosphorylase (FKGP).